The chain runs to 709 residues: Kelch-like protein 11 (709 aa).

An N-terminal signal peptide occupies residues 1-15; that stretch reads MAAAVAAAAAAAAAA. One can recognise a BTB domain in the interval 95–171; that stretch reads CDITLCFGGA…MYTGRIRVST (77 aa). Residues 206-308 form the BACK domain; sequence CVAIHSLAHM…KPTYLTRHVK (103 aa). Kelch repeat units follow at residues 361 to 408, 409 to 454, 456 to 502, 504 to 557, and 611 to 662; these read VIMV…ITES, YVYV…EVKG, LYSI…AIED, FVYI…VVNS, and DVFI…HVRI. S466 bears the Phosphoserine mark.

In terms of assembly, homodimer. Interacts with CUL3. Component of a cullin-RING-based BCR (BTB-CUL3-RBX1) E3 ubiquitin-protein ligase complex.

Functionally, component of a cullin-RING-based BCR (BTB-CUL3-RBX1) E3 ubiquitin-protein ligase complex that mediates the ubiquitination of target proteins, leading most often to their proteasomal degradation. The protein is Kelch-like protein 11 (Klhl11) of Mus musculus (Mouse).